A 241-amino-acid chain; its full sequence is tRNA pseudouridine synthase A (241 aa).

Residue Asp-53 is the Nucleophile of the active site. Position 110 (Tyr-110) interacts with substrate.

Belongs to the tRNA pseudouridine synthase TruA family. As to quaternary structure, homodimer.

The catalysed reaction is uridine(38/39/40) in tRNA = pseudouridine(38/39/40) in tRNA. Formation of pseudouridine at positions 38, 39 and 40 in the anticodon stem and loop of transfer RNAs. The sequence is that of tRNA pseudouridine synthase A from Malacoplasma penetrans (strain HF-2) (Mycoplasma penetrans).